The following is a 212-amino-acid chain: Pyridoxine/pyridoxamine 5'-phosphate oxidase (212 aa).

Substrate is bound by residues 8-11 (RTNY) and K66. FMN-binding positions include 61–66 (RIVLLK), 76–77 (FT), K83, and Q105. 3 residues coordinate substrate: Y123, R127, and S131. Residues 140–141 (QS) and W185 contribute to the FMN site. Position 191-193 (191-193 (RLH)) interacts with substrate. R195 lines the FMN pocket.

It belongs to the pyridoxamine 5'-phosphate oxidase family. In terms of assembly, homodimer. The cofactor is FMN.

It catalyses the reaction pyridoxamine 5'-phosphate + O2 + H2O = pyridoxal 5'-phosphate + H2O2 + NH4(+). The enzyme catalyses pyridoxine 5'-phosphate + O2 = pyridoxal 5'-phosphate + H2O2. It functions in the pathway cofactor metabolism; pyridoxal 5'-phosphate salvage; pyridoxal 5'-phosphate from pyridoxamine 5'-phosphate: step 1/1. The protein operates within cofactor metabolism; pyridoxal 5'-phosphate salvage; pyridoxal 5'-phosphate from pyridoxine 5'-phosphate: step 1/1. Its function is as follows. Catalyzes the oxidation of either pyridoxine 5'-phosphate (PNP) or pyridoxamine 5'-phosphate (PMP) into pyridoxal 5'-phosphate (PLP). The sequence is that of Pyridoxine/pyridoxamine 5'-phosphate oxidase from Leptospira biflexa serovar Patoc (strain Patoc 1 / Ames).